A 212-amino-acid polypeptide reads, in one-letter code: ECF RNA polymerase sigma factor SigD (212 aa).

Residues 49–119 (ETIRPIVVRY…VADAHRAAGR (71 aa)) are sigma-70 factor domain-2. A Polymerase core binding motif is present at residues 75–78 (DVAQ). Residues 152–201 (NELLEILPAKQREILILRVVVGLSAEETAAAVGSTTGAVRVAQHRALQRL) form a sigma-70 factor domain-4 region. The H-T-H motif DNA-binding region spans 176–195 (AEETAAAVGSTTGAVRVAQH).

The protein belongs to the sigma-70 factor family. ECF subfamily. In terms of assembly, interacts transiently with the RNA polymerase catalytic core formed by RpoA, RpoB, RpoC and RpoZ (2 alpha, 1 beta, 1 beta' and 1 omega subunit) to form the RNA polymerase holoenzyme that can initiate transcription. Interacts (via sigma-70 factor domain 4) with RsdA.

In terms of biological role, sigma factors are initiation factors that promote the attachment of RNA polymerase to specific initiation sites and are then released. Extracytoplasmic function (ECF) sigma factors are held in an inactive form by an anti-sigma factor until released by regulated intramembrane proteolysis. In Mycobacterium bovis (strain ATCC BAA-935 / AF2122/97), this protein is ECF RNA polymerase sigma factor SigD (sigD).